We begin with the raw amino-acid sequence, 381 residues long: Putative F-box protein At4g17200 (381 aa).

The 47-residue stretch at 1–47 (MTTMSDLSPDLVGEILTRVPMTSLISVRCTCKMWNALSKEGIFFKAA) folds into the F-box domain.

This Arabidopsis thaliana (Mouse-ear cress) protein is Putative F-box protein At4g17200.